The chain runs to 526 residues: Serine/threonine-protein kinase ppk22 (526 aa).

Disordered regions lie at residues 1–24 and 39–106; these read MARETEFNDKSPSSTDDGMSQSHF and AATV…PRPL. The segment covering 10-23 has biased composition (polar residues); that stretch reads KSPSSTDDGMSQSH. A compositionally biased stretch (low complexity) spans 65–78; the sequence is NQLNELDLNDSSDQ. The residue at position 154 (S154) is a Phosphoserine. The Protein kinase domain maps to 155 to 445; that stretch reads FEKIRLLGQG…ASDIKQHPFF (291 aa). Residues 161–169 and K184 each bind ATP; that span reads LGQGDVGKV. The Proton acceptor role is filled by D280. T339 bears the Phosphothreonine mark. S341 is subject to Phosphoserine. Y348 is subject to Phosphotyrosine. The AGC-kinase C-terminal domain maps to 446–526; it reads RHIQWALLRS…SVTLHHAGDE (81 aa). The segment at 499 to 526 is disordered; it reads MHSSTPVNEQSNPFDSFSSVTLHHAGDE. Residues 500–519 are compositionally biased toward polar residues; sequence HSSTPVNEQSNPFDSFSSVT.

The protein belongs to the protein kinase superfamily. AGC Ser/Thr protein kinase family.

It localises to the cytoplasm. It catalyses the reaction L-seryl-[protein] + ATP = O-phospho-L-seryl-[protein] + ADP + H(+). The enzyme catalyses L-threonyl-[protein] + ATP = O-phospho-L-threonyl-[protein] + ADP + H(+). In Schizosaccharomyces pombe (strain 972 / ATCC 24843) (Fission yeast), this protein is Serine/threonine-protein kinase ppk22 (ppk22).